Reading from the N-terminus, the 1279-residue chain is MSGTKWTDEQRQAIFTKNCNLLVVAGAGAGKTAVLVQRIIEKILDKEEPIDIDKLLVVTFTNAAAAEMRERIGDAISKGLDEDPESKVLRKQLTLLNKSNIMTIHSFCLQVIKNNFHTMEIDPNFRICDETEGILMKQEAIDELFDELYEIENEDFINLVESYASRKDTRLQEVVLELHRFAKSAPFPYTWLLNMAEGFNVGENFNFEETLWADMIMEDMKVLLHGFKNMLQQSIDVILNSEGIDYYYEPFKMDLSFINSLLEKSSFKEFRGEIIAYDFPKLPLKRNKDADKEAKERVKKLRDKVKKKIVELKNILDSYENEFIKKEFIFLYPSMKALSNLVILFDKKYEAKKRERDLIDFNDIEHLCLSILTDKNSDGHIIPSDIALNYRKKFAEVLIDEYQDSNLVQEVIMSMVSRVKGYWSFYNGQLIFNEEEINLEEPQIGLDIPNRFMVGDVKQSIYRFRQAKPEIFLDKYNEYNEEEDRKNRKVKLFKNFRSREEVINGVNYLFKQIMSKTIGELDYTEEEALKVGASYGEEVKGEPIELCLMDKKYEISEEVLKEYNVDEEEALDNIQLEGRLVAKKIQKLVGNNLEGGLKVFDKKLGEYRNLQYRDIVILMRATSNWAPVFVEELAKEGIPVFADTNSGYFDTAEIKTMISLLQIIDNPLQDIPLLSVLRSPIASFTDDELIDIRMINKNITFYECMEIIYRLYKNEKLDSYYSFYIEDENKINKIIKDMNEKLKNKICSFIEKLKLWREKSIHIDIDEFIWFLYVETGYYGYAGALQAGEQRQANLRILFQRAKQYAKTSYKGLFNFINFINKLKFSSGDMGSAKILGENENVVRIMSIHKSKGLEFPVVILSGTGKNFNMTDLNKNILFHRDLGYGPDYVDTERRIAYPSLVKNIIKNKIRLETLSEEMRILYVALTRAREKLIITGLINNMDKTVEDWLNLSEDKNKVPEYAVMSGKTYLDWIGPALIKHKDAVSFREELKMTSELSNIVDDKSKWKIELWNKRELLKEKVEEDEVEISEKIKETLMNLEESNYKEEIYKRLSFKYKYDNASSIPTKLSVSDVKKQFILDEKENTEELFKKLELRKPMFMEEKKKISPSERGTIIHLFMQHLDLKKAESEEDIKEQINRLIEREFITYEQSKVISPYKILKFCRGELGKRILNSNNVNKEMPFSIEIPALEIYKELDKEIYKDEKLIIQGVIDCYFEEEDGLVLLDYKTDYVNDIEEIKNRYEIQIKYYEEALNRITGKNVKDKYLYLFSVDNYIKID.

Positions 4-499 (TKWTDEQRQA…VKLFKNFRSR (496 aa)) constitute a UvrD-like helicase ATP-binding domain. 25-32 (AGAGAGKT) contributes to the ATP binding site. The region spanning 526 to 853 (EEALKVGASY…RIMSIHKSKG (328 aa)) is the UvrD-like helicase C-terminal domain.

The protein belongs to the helicase family. AddA subfamily. In terms of assembly, heterodimer of AddA and AddB/RexB. Mg(2+) is required as a cofactor.

It carries out the reaction Couples ATP hydrolysis with the unwinding of duplex DNA by translocating in the 3'-5' direction.. It catalyses the reaction ATP + H2O = ADP + phosphate + H(+). Its function is as follows. The heterodimer acts as both an ATP-dependent DNA helicase and an ATP-dependent, dual-direction single-stranded exonuclease. Recognizes the chi site generating a DNA molecule suitable for the initiation of homologous recombination. The AddA nuclease domain is required for chi fragment generation; this subunit has the helicase and 3' -&gt; 5' nuclease activities. This Clostridium botulinum (strain Langeland / NCTC 10281 / Type F) protein is ATP-dependent helicase/nuclease subunit A.